The chain runs to 276 residues: Energy-coupling factor transporter ATP-binding protein EcfA2 (276 aa).

Residues 1 to 233 (MKTPFERLAL…GEEMAGWGLD (233 aa)) form the ABC transporter domain. 27 to 34 (GHTGSGKS) serves as a coordination point for ATP. Glutamate 158 (proton acceptor) is an active-site residue.

Belongs to the ABC transporter superfamily. Energy-coupling factor EcfA family. Forms a stable energy-coupling factor (ECF) transporter complex composed of 2 membrane-embedded substrate-binding proteins (S component), 2 ATP-binding proteins (A component) and 2 transmembrane proteins (T component).

The protein resides in the cell membrane. Functionally, ATP-binding (A) component of a common energy-coupling factor (ECF) ABC-transporter complex. Unlike classic ABC transporters this ECF transporter provides the energy necessary to transport a number of different substrates. The protein is Energy-coupling factor transporter ATP-binding protein EcfA2 of Bacillus subtilis (strain 168).